Consider the following 483-residue polypeptide: Glutamyl-tRNA(Gln) amidotransferase subunit A (483 aa).

Catalysis depends on charge relay system residues lysine 77 and serine 152. Serine 176 functions as the Acyl-ester intermediate in the catalytic mechanism.

Belongs to the amidase family. GatA subfamily. In terms of assembly, heterotrimer of A, B and C subunits.

The catalysed reaction is L-glutamyl-tRNA(Gln) + L-glutamine + ATP + H2O = L-glutaminyl-tRNA(Gln) + L-glutamate + ADP + phosphate + H(+). Functionally, allows the formation of correctly charged Gln-tRNA(Gln) through the transamidation of misacylated Glu-tRNA(Gln) in organisms which lack glutaminyl-tRNA synthetase. The reaction takes place in the presence of glutamine and ATP through an activated gamma-phospho-Glu-tRNA(Gln). The protein is Glutamyl-tRNA(Gln) amidotransferase subunit A of Listeria monocytogenes serotype 4a (strain HCC23).